A 226-amino-acid chain; its full sequence is UPF0758 protein M28_Spy0816 (226 aa).

The 123-residue stretch at Ser-103–Leu-225 folds into the MPN domain. Zn(2+) contacts are provided by His-174, His-176, and Asp-187. A JAMM motif motif is present at residues His-174–Asp-187.

This sequence belongs to the UPF0758 family.

The sequence is that of UPF0758 protein M28_Spy0816 from Streptococcus pyogenes serotype M28 (strain MGAS6180).